The following is a 421-amino-acid chain: MRVLRLTPFFHHDCVTAWPAEFDAVGGMQVQILRLSRELADRGVEQLVMTVGFPGLPRERVDRPGLRVRVTRAPLPRLRSELTGLVGLNQAWLAAVLTACAPLRRTWRPDLVHVHADGQLWALLAGPLVSRLVGAPYCLTLHCSRLASYEPMSRFDRLQHRLVAAAERYALRRARRVSTLTSRTADTVARLLPLDRALVDVLPDSVGDVRPVARPEAEEYVRSLGVPAGRPVVGWVGRVAHEKGWRDFVAMAERWDAGSGAPGAVFAVVGDGPQRERMREAVEAAGLADRFVFTGFLPHDAVPSVMTALDVLVMPSAHEELGGSALEAMVCGTPVAGYAVGGLRDTVGSVTPSLLVPRGDVAALTRAAGDAVTDAERHRKTVAAAVPDLLGRYGADTVERALEHYRLAVGRASGGGAGWAP.

Belongs to the glycosyltransferase group 1 family. Glycosyltransferase 4 subfamily.

The catalysed reaction is 2-deoxystreptamine + UDP-N-acetyl-alpha-D-glucosamine = 2'-N-acetylparomamine + UDP + H(+). Its pathway is antibiotic biosynthesis; neomycin biosynthesis. Functionally, glycosyltransferase involved in the biosynthesis of neomycin by mediating conversion of 2-deoxystreptamine (2-DOS) to 2'-N-acetylparomamine using UDP-alpha-D-glucosamine as sugar donor. The protein is 2-deoxystreptamine N-acetyl-D-glucosaminyltransferase (neoD) of Streptomyces fradiae (Streptomyces roseoflavus).